The following is a 628-amino-acid chain: 1,4-alpha-glucan branching enzyme GlgB (628 aa).

Aspartate 304 functions as the Nucleophile in the catalytic mechanism. Residue glutamate 355 is the Proton donor of the active site.

Belongs to the glycosyl hydrolase 13 family. GlgB subfamily. Monomer.

The enzyme catalyses Transfers a segment of a (1-&gt;4)-alpha-D-glucan chain to a primary hydroxy group in a similar glucan chain.. The protein operates within glycan biosynthesis; glycogen biosynthesis. In terms of biological role, catalyzes the formation of the alpha-1,6-glucosidic linkages in glycogen by scission of a 1,4-alpha-linked oligosaccharide from growing alpha-1,4-glucan chains and the subsequent attachment of the oligosaccharide to the alpha-1,6 position. In Streptococcus mutans serotype c (strain ATCC 700610 / UA159), this protein is 1,4-alpha-glucan branching enzyme GlgB.